The sequence spans 73 residues: Waprin-Phi2 (73 aa).

Residues 1 to 21 (MKATLLLLLLFAVILPGTISA) form the signal peptide. Residues 22–72 (EQEKPGSCPNVDMPIPPLGLCKTTCSKDSDCSETKKCCKNGCGFMTCTTAR) form the WAP domain. 4 cysteine pairs are disulfide-bonded: Cys-29-Cys-59, Cys-42-Cys-63, Cys-46-Cys-58, and Cys-52-Cys-68.

Belongs to the venom waprin family. Expressed by the venom gland.

The protein resides in the secreted. Functionally, damages membranes of susceptible bacteria. Has no hemolytic activity. Not toxic to mice. Does not inhibit the proteinases elastase and cathepsin G. This Philodryas olfersii (Green snake) protein is Waprin-Phi2.